Reading from the N-terminus, the 95-residue chain is Aspartyl/glutamyl-tRNA(Asn/Gln) amidotransferase subunit C (95 aa).

It belongs to the GatC family. In terms of assembly, heterotrimer of A, B and C subunits.

It catalyses the reaction L-glutamyl-tRNA(Gln) + L-glutamine + ATP + H2O = L-glutaminyl-tRNA(Gln) + L-glutamate + ADP + phosphate + H(+). The enzyme catalyses L-aspartyl-tRNA(Asn) + L-glutamine + ATP + H2O = L-asparaginyl-tRNA(Asn) + L-glutamate + ADP + phosphate + 2 H(+). In terms of biological role, allows the formation of correctly charged Asn-tRNA(Asn) or Gln-tRNA(Gln) through the transamidation of misacylated Asp-tRNA(Asn) or Glu-tRNA(Gln) in organisms which lack either or both of asparaginyl-tRNA or glutaminyl-tRNA synthetases. The reaction takes place in the presence of glutamine and ATP through an activated phospho-Asp-tRNA(Asn) or phospho-Glu-tRNA(Gln). The sequence is that of Aspartyl/glutamyl-tRNA(Asn/Gln) amidotransferase subunit C from Methylococcus capsulatus (strain ATCC 33009 / NCIMB 11132 / Bath).